The sequence spans 342 residues: Glucokinase (342 aa).

18–23 (GDIGGT) serves as a coordination point for ATP.

This sequence belongs to the bacterial glucokinase family.

It is found in the cytoplasm. It carries out the reaction D-glucose + ATP = D-glucose 6-phosphate + ADP + H(+). The polypeptide is Glucokinase (Chelativorans sp. (strain BNC1)).